Reading from the N-terminus, the 373-residue chain is Dual-specificity RNA methyltransferase RlmN (373 aa).

Glutamate 94 (proton acceptor) is an active-site residue. Positions 100–339 constitute a Radical SAM core domain; that stretch reads EEDRATLCVS…VIVRKTRGDD (240 aa). Residues cysteine 107 and cysteine 344 are joined by a disulfide bond. Cysteine 114, cysteine 118, and cysteine 121 together coordinate [4Fe-4S] cluster. Residues 168 to 169, serine 200, 222 to 224, and asparagine 301 each bind S-adenosyl-L-methionine; these read GE and SIH. Cysteine 344 serves as the catalytic S-methylcysteine intermediate.

Belongs to the radical SAM superfamily. RlmN family. [4Fe-4S] cluster is required as a cofactor.

It localises to the cytoplasm. It catalyses the reaction adenosine(2503) in 23S rRNA + 2 reduced [2Fe-2S]-[ferredoxin] + 2 S-adenosyl-L-methionine = 2-methyladenosine(2503) in 23S rRNA + 5'-deoxyadenosine + L-methionine + 2 oxidized [2Fe-2S]-[ferredoxin] + S-adenosyl-L-homocysteine. It carries out the reaction adenosine(37) in tRNA + 2 reduced [2Fe-2S]-[ferredoxin] + 2 S-adenosyl-L-methionine = 2-methyladenosine(37) in tRNA + 5'-deoxyadenosine + L-methionine + 2 oxidized [2Fe-2S]-[ferredoxin] + S-adenosyl-L-homocysteine. Specifically methylates position 2 of adenine 2503 in 23S rRNA and position 2 of adenine 37 in tRNAs. m2A2503 modification seems to play a crucial role in the proofreading step occurring at the peptidyl transferase center and thus would serve to optimize ribosomal fidelity. In Shewanella loihica (strain ATCC BAA-1088 / PV-4), this protein is Dual-specificity RNA methyltransferase RlmN.